We begin with the raw amino-acid sequence, 250 residues long: Uracil-DNA glycosylase (250 aa).

Residue aspartate 78 is the Proton acceptor of the active site. The tract at residues 228–250 (RGQKPVDWSGEQNNASRQGEFAL) is disordered.

Belongs to the uracil-DNA glycosylase (UDG) superfamily. UNG family.

The protein resides in the cytoplasm. The enzyme catalyses Hydrolyzes single-stranded DNA or mismatched double-stranded DNA and polynucleotides, releasing free uracil.. Functionally, excises uracil residues from the DNA which can arise as a result of misincorporation of dUMP residues by DNA polymerase or due to deamination of cytosine. This is Uracil-DNA glycosylase from Bordetella pertussis (strain Tohama I / ATCC BAA-589 / NCTC 13251).